A 342-amino-acid polypeptide reads, in one-letter code: DNA-directed RNA polymerase subunit alpha (342 aa).

Residues 1–239 (MTTFLAKNWS…DQLQVFINFQ (239 aa)) form an alpha N-terminal domain (alpha-NTD) region. An alpha C-terminal domain (alpha-CTD) region spans residues 254 to 342 (INPVLLKKVY…SLAKKHEDQY (89 aa)).

The protein belongs to the RNA polymerase alpha chain family. Homodimer. The RNAP catalytic core consists of 2 alpha, 1 beta, 1 beta' and 1 omega subunit. When a sigma factor is associated with the core the holoenzyme is formed, which can initiate transcription.

The enzyme catalyses RNA(n) + a ribonucleoside 5'-triphosphate = RNA(n+1) + diphosphate. Functionally, DNA-dependent RNA polymerase catalyzes the transcription of DNA into RNA using the four ribonucleoside triphosphates as substrates. This is DNA-directed RNA polymerase subunit alpha from Orientia tsutsugamushi (strain Boryong) (Rickettsia tsutsugamushi).